Here is a 177-residue protein sequence, read N- to C-terminus: Large ribosomal subunit protein uL6 (177 aa).

It belongs to the universal ribosomal protein uL6 family. As to quaternary structure, part of the 50S ribosomal subunit.

Functionally, this protein binds to the 23S rRNA, and is important in its secondary structure. It is located near the subunit interface in the base of the L7/L12 stalk, and near the tRNA binding site of the peptidyltransferase center. The sequence is that of Large ribosomal subunit protein uL6 from Parvibaculum lavamentivorans (strain DS-1 / DSM 13023 / NCIMB 13966).